The sequence spans 171 residues: Peptide deformylase (171 aa).

Residues cysteine 91 and histidine 133 each coordinate Fe cation. Glutamate 134 is a catalytic residue. Position 137 (histidine 137) interacts with Fe cation.

The protein belongs to the polypeptide deformylase family. Fe(2+) serves as cofactor.

It catalyses the reaction N-terminal N-formyl-L-methionyl-[peptide] + H2O = N-terminal L-methionyl-[peptide] + formate. Its function is as follows. Removes the formyl group from the N-terminal Met of newly synthesized proteins. Requires at least a dipeptide for an efficient rate of reaction. N-terminal L-methionine is a prerequisite for activity but the enzyme has broad specificity at other positions. This chain is Peptide deformylase, found in Hamiltonella defensa subsp. Acyrthosiphon pisum (strain 5AT).